Here is a 142-residue protein sequence, read N- to C-terminus: Large ribosomal subunit protein uL13 (142 aa).

This sequence belongs to the universal ribosomal protein uL13 family. As to quaternary structure, part of the 50S ribosomal subunit.

In terms of biological role, this protein is one of the early assembly proteins of the 50S ribosomal subunit, although it is not seen to bind rRNA by itself. It is important during the early stages of 50S assembly. The polypeptide is Large ribosomal subunit protein uL13 (Erwinia tasmaniensis (strain DSM 17950 / CFBP 7177 / CIP 109463 / NCPPB 4357 / Et1/99)).